The chain runs to 20 residues: Phylloseptin-O1 (20 aa).

At Gly20 the chain carries Glycine amide.

In terms of tissue distribution, expressed by the skin glands.

The protein resides in the secreted. In terms of biological role, has antiprotozoal activity against T.cruzi. The protein is Phylloseptin-O1 (psn4) of Pithecopus oreades (Orange-legged leaf frog).